A 513-amino-acid polypeptide reads, in one-letter code: Activin receptor type-2A (513 aa).

An N-terminal signal peptide occupies residues 1–19; that stretch reads MGAATKLAFAVFLISCSSG. Residues 20–139 are Extracellular-facing; sequence AILGRSETQE…VTPKPPLFNT (120 aa). Intrachain disulfides connect C30/C60, C50/C78, C85/C104, C91/C103, and C105/C110. Residues N43 and N66 are each glycosylated (N-linked (GlcNAc...) asparagine). A helical membrane pass occupies residues 140–160; the sequence is LLYSLVPIMGIAVIVLFSFWM. Over 161–513 the chain is Cytoplasmic; sequence YRHHKLAYPP…VDFPPKESSL (353 aa). The Protein kinase domain occupies 192-485; that stretch reads LQLLEIKARG…EERIIQMQKL (294 aa). ATP contacts are provided by residues 198–206 and K219; that span reads KARGRFGCV. D322 serves as the catalytic Proton acceptor.

Belongs to the protein kinase superfamily. TKL Ser/Thr protein kinase family. TGFB receptor subfamily. Requires Mg(2+) as cofactor. The cofactor is Mn(2+). In terms of tissue distribution, expressed in hen anterior pituitary during the ovulatory cycle and in the ovarian follicle.

It is found in the cell membrane. It carries out the reaction L-threonyl-[receptor-protein] + ATP = O-phospho-L-threonyl-[receptor-protein] + ADP + H(+). The catalysed reaction is L-seryl-[receptor-protein] + ATP = O-phospho-L-seryl-[receptor-protein] + ADP + H(+). Functionally, on ligand binding, forms a receptor complex consisting of two type II and two type I transmembrane serine/threonine kinases. Type II receptors phosphorylate and activate type I receptors which autophosphorylate, then bind and activate SMAD transcriptional regulators. Receptor for activin A, activin B and inhibin A. May modulate neuropeptide expression in dorsal root ganglia (DRG) neurons and ovarian follicle development. The protein is Activin receptor type-2A (ACVR2A) of Gallus gallus (Chicken).